A 202-amino-acid polypeptide reads, in one-letter code: CASP-like protein 2B1 (202 aa).

Over 1–29 (MSYLGVGVSPGNVPVYHGSNLKVIDKRVR) the chain is Cytoplasmic. A helical membrane pass occupies residues 30-50 (LAELVLRCLICGLGVLAAVLV). Over 51–72 (GTDTQVKEIFSIQKKARFTDMK) the chain is Extracellular. Residues 73-93 (ALVFLVIANGIAAAYSLLQGV) traverse the membrane as a helical segment. The Cytoplasmic segment spans residues 94-109 (RCVVGMVRGSALFSKP). Residues 110–130 (LAWAIFSGDQMMAYLTVAAVA) traverse the membrane as a helical segment. Residues 131–164 (AAAQSAVFAKLGQPELQWMKICNMYGKFCNQVGE) lie on the Extracellular side of the membrane. The helical transmembrane segment at 165 to 185 (GIASALLVSVSMVVLSCISAF) threads the bilayer. The Cytoplasmic portion of the chain corresponds to 186 to 202 (SLFRLYGANKGKDCTRW).

It belongs to the Casparian strip membrane proteins (CASP) family. Homodimer and heterodimers.

It is found in the cell membrane. The protein is CASP-like protein 2B1 of Ricinus communis (Castor bean).